A 596-amino-acid chain; its full sequence is NADH-quinone oxidoreductase subunit C/D (596 aa).

Residues 1-186 form an NADH dehydrogenase I subunit C region; the sequence is MTDLTAQDAA…DPFELTKAKQ (186 aa). The tract at residues 210–596 is NADH dehydrogenase I subunit D; it reads DFMFLNLGPN…IDFVMSDVDR (387 aa).

This sequence in the N-terminal section; belongs to the complex I 30 kDa subunit family. In the C-terminal section; belongs to the complex I 49 kDa subunit family. NDH-1 is composed of 13 different subunits. Subunits NuoB, CD, E, F, and G constitute the peripheral sector of the complex.

The protein resides in the cell inner membrane. It carries out the reaction a quinone + NADH + 5 H(+)(in) = a quinol + NAD(+) + 4 H(+)(out). NDH-1 shuttles electrons from NADH, via FMN and iron-sulfur (Fe-S) centers, to quinones in the respiratory chain. The immediate electron acceptor for the enzyme in this species is believed to be ubiquinone. Couples the redox reaction to proton translocation (for every two electrons transferred, four hydrogen ions are translocated across the cytoplasmic membrane), and thus conserves the redox energy in a proton gradient. The protein is NADH-quinone oxidoreductase subunit C/D of Salmonella choleraesuis (strain SC-B67).